Consider the following 311-residue polypeptide: Urease accessory protein UreD (311 aa).

The protein belongs to the UreD family. UreD, UreF and UreG form a complex that acts as a GTP-hydrolysis-dependent molecular chaperone, activating the urease apoprotein by helping to assemble the nickel containing metallocenter of UreC. The UreE protein probably delivers the nickel.

It localises to the cytoplasm. Required for maturation of urease via the functional incorporation of the urease nickel metallocenter. The sequence is that of Urease accessory protein UreD from Synechococcus sp. (strain CC9902).